The primary structure comprises 1141 residues: DNA-directed RNA polymerase subunit beta (1141 aa).

The tract at residues 1117–1141 (GINISREEPPGQLDDTPDTFSRGGM) is disordered.

This sequence belongs to the RNA polymerase beta chain family. The RNAP catalytic core consists of 2 alpha, 1 beta, 1 beta' and 1 omega subunit. When a sigma factor is associated with the core the holoenzyme is formed, which can initiate transcription.

It carries out the reaction RNA(n) + a ribonucleoside 5'-triphosphate = RNA(n+1) + diphosphate. In terms of biological role, DNA-dependent RNA polymerase catalyzes the transcription of DNA into RNA using the four ribonucleoside triphosphates as substrates. This is DNA-directed RNA polymerase subunit beta from Rubrobacter xylanophilus (strain DSM 9941 / JCM 11954 / NBRC 16129 / PRD-1).